The following is a 70-amino-acid chain: U-actitoxin-Avd11a (70 aa).

The ShKT domain occupies 36-70; the sequence is CNDYKSSSYCRSVGSRNECGIHKYRMYCRKTCGSC. 3 disulfide bridges follow: Cys-36/Cys-70, Cys-45/Cys-63, and Cys-54/Cys-67. Residues 58–59 form a crucial for binding to potassium channels region; the sequence is KY.

This sequence belongs to the sea anemone type 1 potassium channel toxin family. Type 1b subfamily.

Its subcellular location is the secreted. It is found in the nematocyst. In terms of biological role, inhibits voltage-gated potassium channels (Kv1/KCNA). The polypeptide is U-actitoxin-Avd11a (Anemonia viridis (Snakelocks anemone)).